A 371-amino-acid polypeptide reads, in one-letter code: Queuine tRNA-ribosyltransferase (371 aa).

The active-site Proton acceptor is the aspartate 90. Substrate contacts are provided by residues 90 to 94 (DSGGF), aspartate 144, glutamine 188, and glycine 215. An RNA binding region spans residues 246–252 (GVGTPED). Aspartate 265 acts as the Nucleophile in catalysis. The segment at 270–274 (TRNAR) is RNA binding; important for wobble base 34 recognition. Residues cysteine 303, cysteine 305, cysteine 308, and histidine 334 each coordinate Zn(2+).

This sequence belongs to the queuine tRNA-ribosyltransferase family. Homodimer. Within each dimer, one monomer is responsible for RNA recognition and catalysis, while the other monomer binds to the replacement base PreQ1. It depends on Zn(2+) as a cofactor.

It catalyses the reaction 7-aminomethyl-7-carbaguanine + guanosine(34) in tRNA = 7-aminomethyl-7-carbaguanosine(34) in tRNA + guanine. It functions in the pathway tRNA modification; tRNA-queuosine biosynthesis. In terms of biological role, catalyzes the base-exchange of a guanine (G) residue with the queuine precursor 7-aminomethyl-7-deazaguanine (PreQ1) at position 34 (anticodon wobble position) in tRNAs with GU(N) anticodons (tRNA-Asp, -Asn, -His and -Tyr). Catalysis occurs through a double-displacement mechanism. The nucleophile active site attacks the C1' of nucleotide 34 to detach the guanine base from the RNA, forming a covalent enzyme-RNA intermediate. The proton acceptor active site deprotonates the incoming PreQ1, allowing a nucleophilic attack on the C1' of the ribose to form the product. After dissociation, two additional enzymatic reactions on the tRNA convert PreQ1 to queuine (Q), resulting in the hypermodified nucleoside queuosine (7-(((4,5-cis-dihydroxy-2-cyclopenten-1-yl)amino)methyl)-7-deazaguanosine). The polypeptide is Queuine tRNA-ribosyltransferase (Neisseria meningitidis serogroup C (strain 053442)).